Here is a 229-residue protein sequence, read N- to C-terminus: uncharacterized protein (229 aa).

Residues 66-94 (GHEKLQIQSALRDIESAENQARVQQCNAK) adopt a coiled-coil conformation.

This is an uncharacterized protein from Ostreid herpesvirus 1 (isolate France) (OsHV-1).